The sequence spans 377 residues: Glutamate 5-kinase (377 aa).

K20 serves as a coordination point for ATP. Positions 60, 147, and 159 each coordinate substrate. 179–180 (TD) provides a ligand contact to ATP. Residues 285-363 (AGRLVIDDGA…DKVYQVLGEA (79 aa)) enclose the PUA domain.

This sequence belongs to the glutamate 5-kinase family.

The protein resides in the cytoplasm. It catalyses the reaction L-glutamate + ATP = L-glutamyl 5-phosphate + ADP. Its pathway is amino-acid biosynthesis; L-proline biosynthesis; L-glutamate 5-semialdehyde from L-glutamate: step 1/2. Functionally, catalyzes the transfer of a phosphate group to glutamate to form L-glutamate 5-phosphate. In Acinetobacter baumannii (strain SDF), this protein is Glutamate 5-kinase.